The chain runs to 317 residues: Malate dehydrogenase (317 aa).

NAD(+) contacts are provided by residues 15-20 and aspartate 39; that span reads GSGNIG. 2 residues coordinate substrate: arginine 88 and arginine 94. NAD(+) contacts are provided by residues asparagine 101 and 124–126; that span reads VTN. Residues asparagine 126 and arginine 157 each coordinate substrate. Histidine 181 (proton acceptor) is an active-site residue.

This sequence belongs to the LDH/MDH superfamily. MDH type 3 family.

It carries out the reaction (S)-malate + NAD(+) = oxaloacetate + NADH + H(+). In terms of biological role, catalyzes the reversible oxidation of malate to oxaloacetate. In Ehrlichia ruminantium (strain Gardel), this protein is Malate dehydrogenase.